Here is a 103-residue protein sequence, read N- to C-terminus: Large ribosomal subunit protein bL21 (103 aa).

Belongs to the bacterial ribosomal protein bL21 family. As to quaternary structure, part of the 50S ribosomal subunit. Contacts protein L20.

In terms of biological role, this protein binds to 23S rRNA in the presence of protein L20. This Nitrosomonas europaea (strain ATCC 19718 / CIP 103999 / KCTC 2705 / NBRC 14298) protein is Large ribosomal subunit protein bL21.